We begin with the raw amino-acid sequence, 216 residues long: Vascular endothelial growth factor A (216 aa).

The first 26 residues, 1-26 (MNFLLTWIHWGLAALLYLQSAELSKA), serve as a signal peptide directing secretion. 3 cysteine pairs are disulfide-bonded: C52–C94, C83–C128, and C87–C130. The N-linked (GlcNAc...) asparagine glycan is linked to N101. The span at 132–141 (PKKDVKNKQE) shows a compositional bias: basic and acidic residues. The disordered stretch occupies residues 132–167 (PKKDVKNKQEKKSKRGKGKGQKRKRKKGRYKPPSFH). Residues 142–161 (KKSKRGKGKGQKRKRKKGRY) are compositionally biased toward basic residues.

The protein belongs to the PDGF/VEGF growth factor family. As to quaternary structure, homodimer; disulfide-linked. Also found as heterodimer with PGF.

Its function is as follows. Growth factor active in angiogenesis, vasculogenesis and endothelial cell growth. Induces endothelial cell proliferation, promotes cell migration, inhibits apoptosis and induces permeabilization of blood vessels. Binds to the FLT1/VEGFR1 and KDR/VEGFR2 receptors, heparan sulfate and heparin. In Gallus gallus (Chicken), this protein is Vascular endothelial growth factor A (VEGFA).